The sequence spans 430 residues: Enolase (430 aa).

Glutamine 164 lines the (2R)-2-phosphoglycerate pocket. The active-site Proton donor is glutamate 208. Mg(2+) contacts are provided by aspartate 245, glutamate 288, and aspartate 315. 4 residues coordinate (2R)-2-phosphoglycerate: lysine 340, arginine 369, serine 370, and lysine 391. Lysine 340 acts as the Proton acceptor in catalysis.

Belongs to the enolase family. Requires Mg(2+) as cofactor.

The protein localises to the cytoplasm. It localises to the secreted. It is found in the cell surface. It carries out the reaction (2R)-2-phosphoglycerate = phosphoenolpyruvate + H2O. Its pathway is carbohydrate degradation; glycolysis; pyruvate from D-glyceraldehyde 3-phosphate: step 4/5. Catalyzes the reversible conversion of 2-phosphoglycerate (2-PG) into phosphoenolpyruvate (PEP). It is essential for the degradation of carbohydrates via glycolysis. The polypeptide is Enolase (Pyrococcus furiosus (strain ATCC 43587 / DSM 3638 / JCM 8422 / Vc1)).